A 325-amino-acid polypeptide reads, in one-letter code: UPF0324 membrane protein Bd1437 (325 aa).

The next 8 helical transmembrane spans lie at I21–L43, Y58–G80, I87–G105, S115–I137, V144–G166, A211–G230, P243–P260, and L302–I324.

The protein belongs to the UPF0324 family.

Its subcellular location is the cell membrane. This chain is UPF0324 membrane protein Bd1437, found in Bdellovibrio bacteriovorus (strain ATCC 15356 / DSM 50701 / NCIMB 9529 / HD100).